A 246-amino-acid polypeptide reads, in one-letter code: Flavin-dependent thymidylate synthase (246 aa).

The ThyX domain maps to 17-241 (VTVELVKHSA…PLTYAAFNTN (225 aa)). FAD-binding positions include S69, 92-94 (RHR), and E101. DUMP contacts are provided by residues 89 to 92 (EFMR), 101 to 105 (EESGR), and R173. A ThyX motif motif is present at residues 92–103 (RHRVGWSYNEES). FAD contacts are provided by residues 189-191 (NAR) and H195. DUMP is bound at residue R200. R200 acts as the Involved in ionization of N3 of dUMP, leading to its activation in catalysis.

The protein belongs to the thymidylate synthase ThyX family. As to quaternary structure, homotetramer. FAD is required as a cofactor.

The catalysed reaction is dUMP + (6R)-5,10-methylene-5,6,7,8-tetrahydrofolate + NADPH + H(+) = dTMP + (6S)-5,6,7,8-tetrahydrofolate + NADP(+). The protein operates within pyrimidine metabolism; dTTP biosynthesis. Its function is as follows. Catalyzes the reductive methylation of 2'-deoxyuridine-5'-monophosphate (dUMP) to 2'-deoxythymidine-5'-monophosphate (dTMP) while utilizing 5,10-methylenetetrahydrofolate (mTHF) as the methyl donor, and NADPH and FADH(2) as the reductant. This chain is Flavin-dependent thymidylate synthase, found in Streptomyces avermitilis (strain ATCC 31267 / DSM 46492 / JCM 5070 / NBRC 14893 / NCIMB 12804 / NRRL 8165 / MA-4680).